The following is a 402-amino-acid chain: Phosphopentomutase (402 aa).

Mn(2+)-binding residues include D10, D301, H306, D342, H343, and H354.

It belongs to the phosphopentomutase family. Requires Mn(2+) as cofactor.

The protein localises to the cytoplasm. The enzyme catalyses 2-deoxy-alpha-D-ribose 1-phosphate = 2-deoxy-D-ribose 5-phosphate. It carries out the reaction alpha-D-ribose 1-phosphate = D-ribose 5-phosphate. The protein operates within carbohydrate degradation; 2-deoxy-D-ribose 1-phosphate degradation; D-glyceraldehyde 3-phosphate and acetaldehyde from 2-deoxy-alpha-D-ribose 1-phosphate: step 1/2. Isomerase that catalyzes the conversion of deoxy-ribose 1-phosphate (dRib-1-P) and ribose 1-phosphate (Rib-1-P) to deoxy-ribose 5-phosphate (dRib-5-P) and ribose 5-phosphate (Rib-5-P), respectively. This Aeromonas hydrophila subsp. hydrophila (strain ATCC 7966 / DSM 30187 / BCRC 13018 / CCUG 14551 / JCM 1027 / KCTC 2358 / NCIMB 9240 / NCTC 8049) protein is Phosphopentomutase.